The chain runs to 666 residues: Putative cysteine-rich receptor-like protein kinase 31 (666 aa).

An N-terminal signal peptide occupies residues Met-1–Ala-23. Gnk2-homologous domains are found at residues Gln-24–Phe-130 and Leu-136–Tyr-245. Topologically, residues Gln-24–Val-280 are extracellular. 5 N-linked (GlcNAc...) asparagine glycosylation sites follow: Asn-52, Asn-62, Asn-104, Asn-127, and Asn-151. Residues Ile-281–Ile-301 traverse the membrane as a helical segment. At Trp-302 to Arg-666 the chain is on the cytoplasmic side. The region spanning Phe-339–Ile-616 is the Protein kinase domain. Residues Leu-345–Val-353 and Lys-367 contribute to the ATP site. A Phosphotyrosine modification is found at Tyr-412. Asp-464 functions as the Proton acceptor in the catalytic mechanism. Phosphoserine is present on Ser-468. Thr-504 carries the post-translational modification Phosphothreonine. Tyr-512 carries the phosphotyrosine modification.

This sequence belongs to the protein kinase superfamily. Ser/Thr protein kinase family. CRK subfamily.

It localises to the membrane. The catalysed reaction is L-seryl-[protein] + ATP = O-phospho-L-seryl-[protein] + ADP + H(+). The enzyme catalyses L-threonyl-[protein] + ATP = O-phospho-L-threonyl-[protein] + ADP + H(+). In Arabidopsis thaliana (Mouse-ear cress), this protein is Putative cysteine-rich receptor-like protein kinase 31 (CRK31).